Consider the following 394-residue polypeptide: NAD(P)H-quinone oxidoreductase subunit H (394 aa).

The protein belongs to the complex I 49 kDa subunit family. As to quaternary structure, NDH-1 can be composed of about 15 different subunits; different subcomplexes with different compositions have been identified which probably have different functions.

Its subcellular location is the cellular thylakoid membrane. It carries out the reaction a plastoquinone + NADH + (n+1) H(+)(in) = a plastoquinol + NAD(+) + n H(+)(out). The catalysed reaction is a plastoquinone + NADPH + (n+1) H(+)(in) = a plastoquinol + NADP(+) + n H(+)(out). In terms of biological role, NDH-1 shuttles electrons from an unknown electron donor, via FMN and iron-sulfur (Fe-S) centers, to quinones in the respiratory and/or the photosynthetic chain. The immediate electron acceptor for the enzyme in this species is believed to be plastoquinone. Couples the redox reaction to proton translocation, and thus conserves the redox energy in a proton gradient. Cyanobacterial NDH-1 also plays a role in inorganic carbon-concentration. This is NAD(P)H-quinone oxidoreductase subunit H from Prochlorococcus marinus (strain MIT 9303).